The chain runs to 167 residues: Respiratory supercomplex factor 1-A, mitochondrial (167 aa).

The region spanning 1–86 (MCSDFEEETS…TERKQRREFE (86 aa)) is the HIG1 domain. 2 helical membrane-spanning segments follow: residues 21–38 (EPLI…LYRA) and 53–75 (MFRA…GMYY). Positions 75–107 (YKTERKQRREFEKKVEERKAQEKRDAWLRELEA) form a coiled coil.

Belongs to the RCF1 family. As to quaternary structure, associates with the respiratory chain complex III/complex IV supercomplex.

It localises to the mitochondrion membrane. In terms of biological role, cytochrome c oxidase subunit which plays a role in assembly of respiratory supercomplexes. This Talaromyces marneffei (strain ATCC 18224 / CBS 334.59 / QM 7333) (Penicillium marneffei) protein is Respiratory supercomplex factor 1-A, mitochondrial (rcf1-A).